The following is a 287-amino-acid chain: Probable phosphite transport system-binding protein PtxB (287 aa).

The signal sequence occupies residues 1 to 23 (MKRLSALLLTCLLSAVSSLSALA).

This sequence belongs to the phosphate/phosphite/phosphonate binding protein family.

Probably forms part of a binding-protein-dependent phosphite transporter. Required for oxidation of phosphite to phosphate. This chain is Probable phosphite transport system-binding protein PtxB (ptxB), found in Stutzerimonas stutzeri (Pseudomonas stutzeri).